The primary structure comprises 394 residues: Major outer membrane porin, serovar B (394 aa).

Positions 1-22 (MKKLLKSVLVFAALSSASSLQA) are cleaved as a signal peptide.

Belongs to the chlamydial porin (CP) (TC 1.B.2) family. As to quaternary structure, part of a disulfide cross-linked outer membrane complex (COMC) composed of the major outer membrane porin (MOMP), the small cysteine-rich protein (OmcA) and the large cysteine-rich periplasmic protein (OmcB).

It is found in the cell outer membrane. In terms of biological role, in elementary bodies (EBs, the infectious stage, which is able to survive outside the host cell) provides the structural integrity of the outer envelope through disulfide cross-links with the small cysteine-rich protein and the large cysteine-rich periplasmic protein. It has been described in publications as the Sarkosyl-insoluble COMC (Chlamydia outer membrane complex), and serves as the functional equivalent of peptidoglycan. Permits diffusion of specific solutes through the outer membrane. In Chlamydia trachomatis, this protein is Major outer membrane porin, serovar B (ompA).